A 91-amino-acid polypeptide reads, in one-letter code: UPF0250 protein BP0104 (91 aa).

The protein belongs to the UPF0250 family.

The chain is UPF0250 protein BP0104 from Bordetella pertussis (strain Tohama I / ATCC BAA-589 / NCTC 13251).